The primary structure comprises 283 residues: Shikimate dehydrogenase (NADP(+)) (283 aa).

Residues 19–21 and Thr66 each bind shikimate; that span reads SLS. Residue Lys70 is the Proton acceptor of the active site. 2 residues coordinate shikimate: Asn91 and Asp106. NADP(+)-binding positions include 129-133, 153-158, and Leu224; these read GAGGA and NRTPEK. Residue Tyr226 participates in shikimate binding. Residue Gly247 coordinates NADP(+).

The protein belongs to the shikimate dehydrogenase family. In terms of assembly, homodimer.

The catalysed reaction is shikimate + NADP(+) = 3-dehydroshikimate + NADPH + H(+). It participates in metabolic intermediate biosynthesis; chorismate biosynthesis; chorismate from D-erythrose 4-phosphate and phosphoenolpyruvate: step 4/7. Its function is as follows. Involved in the biosynthesis of the chorismate, which leads to the biosynthesis of aromatic amino acids. Catalyzes the reversible NADPH linked reduction of 3-dehydroshikimate (DHSA) to yield shikimate (SA). This is Shikimate dehydrogenase (NADP(+)) from Methanothermobacter thermautotrophicus (strain ATCC 29096 / DSM 1053 / JCM 10044 / NBRC 100330 / Delta H) (Methanobacterium thermoautotrophicum).